The sequence spans 1943 residues: Cadherin-86C (1943 aa).

A disordered region spans residues Met-1 to Pro-102. Residues Met-1–Lys-934 are Extracellular-facing. Asn-12 is a glycosylation site (N-linked (GlcNAc...) asparagine). The segment covering Pro-50 to Gln-89 has biased composition (basic residues). Residues His-90 to His-100 show a composition bias toward low complexity. 5 consecutive Cadherin domains span residues Cys-238–Phe-366, Thr-367–Phe-483, Glu-484–Phe-600, Glu-601–Phe-708, and Asp-709–Phe-832. Residues Asn-244, Asn-419, Asn-531, Asn-579, Asn-585, Asn-612, and Asn-645 are each glycosylated (N-linked (GlcNAc...) asparagine). Asn-912 is a glycosylation site (N-linked (GlcNAc...) asparagine). A helical transmembrane segment spans residues Val-935–Leu-955. The Cytoplasmic segment spans residues Leu-956–Ser-1943. 5 disordered regions span residues Asp-1038–Glu-1058, Lys-1390–Ile-1442, Glu-1458–Arg-1516, Tyr-1546–Val-1695, and Lys-1707–Asp-1895. A compositionally biased stretch (basic and acidic residues) spans Glu-1047–Glu-1058. Basic residues predominate over residues Ile-1426–Ile-1442. Basic and acidic residues-rich tracts occupy residues Gln-1486–Arg-1497 and His-1507–Arg-1516. Residues Asp-1552–Glu-1568 are compositionally biased toward acidic residues. Residues Gln-1580–Lys-1602 show a composition bias toward basic and acidic residues. Residues Lys-1633–Ile-1667 are compositionally biased toward polar residues. Residues Ser-1709–Ser-1724 are compositionally biased toward low complexity. Basic and acidic residues-rich tracts occupy residues Thr-1754–Pro-1764, Leu-1774–Thr-1793, His-1800–Ala-1810, and Lys-1837–Val-1863. The span at His-1879–Thr-1889 shows a compositional bias: polar residues.

As cell intercalation proceeds, a row of stigmatophore cells surrounding the spiracular chamber show expression of Cad86C. Expression is regulated by the Abd-B cascade, requiring sal. Expressed in a broad region of the morphogenetic furrow and in clusters of cells posterior to the morphogenetic furrow. Weakly expressed in the epithelium of wing imaginal disks. In eye imaginal disk cells within the morphogenetic furrow, expression is localized to the apical region.

It localises to the cell membrane. In terms of biological role, cadherins are calcium-dependent cell adhesion proteins. They preferentially interact with themselves in a homophilic manner in connecting cells. The polypeptide is Cadherin-86C (Cad86C) (Drosophila melanogaster (Fruit fly)).